We begin with the raw amino-acid sequence, 298 residues long: ADP/ATP translocase 2 (298 aa).

Methionine 1 is subject to N-acetylmethionine. The Mitochondrial intermembrane segment spans residues 1 to 7; sequence MTDAAVS. The residue at position 2 (threonine 2) is an N-acetylthreonine; in ADP/ATP translocase 2, N-terminally processed. The stretch at 6-98 is one Solcar 1 repeat; it reads VSFAKDFLAG…FAFKDKYKQI (93 aa). Serine 7 bears the Phosphoserine mark. A helical transmembrane segment spans residues 8–37; sequence FAKDFLAGGVAAAISKTAVAPIERVKLLLQ. Lysine 23 is subject to N6-malonyllysine. Residues 38–74 are Mitochondrial matrix-facing; it reads VQHASKQITADKQYKGIIDCVVRIPKEQGVLSFWRGN. Lysine 43 is subject to N6-succinyllysine. N6,N6,N6-trimethyllysine; alternate is present on lysine 52. Lysine 52 carries the post-translational modification N6,N6-dimethyllysine; alternate. Lysine 52 is subject to N6-methyllysine; alternate. Residues 75–99 form a helical membrane-spanning segment; the sequence is LANVIRYFPTQALNFAFKDKYKQIF. ADP contacts are provided by arginine 80 and lysine 92. An N6-malonyllysine mark is found at lysine 92 and lysine 96. At 100–109 the chain is on the mitochondrial intermembrane side; it reads LGGVDKRTQF. Lysine 105 bears the N6-acetyllysine; alternate mark. Lysine 105 carries the post-translational modification N6-succinyllysine; alternate. The chain crosses the membrane as a helical span at residues 110-130; it reads WRYFAGNLASGGAAGATSLCF. 2 Solcar repeats span residues 111–201 and 212–297; these read RYFA…AKGM and ISWM…IKKF. At 131-178 the chain is on the mitochondrial matrix side; the sequence is VYPLDFARTRLAADVGKAGAEREFRGLGDCLVKIYKSDGIRGLYQGFN. Lysine 147 bears the N6-methyllysine; alternate mark. Residue lysine 147 is modified to N6-acetyllysine; alternate. Lysine 147 is modified (N6-succinyllysine; alternate). Position 147 is an N6-malonyllysine; alternate (lysine 147). N6-acetyllysine occurs at positions 163 and 166. Residues 179-199 form a helical membrane-spanning segment; sequence VSVQGIIIYRAAYFGIYDTAK. Topologically, residues 200–210 are mitochondrial intermembrane; that stretch reads GMLPDPKNTHI. Residues 211–231 form a helical membrane-spanning segment; sequence FISWMIAQSVTAVAGLTSYPF. Over 232–273 the chain is Mitochondrial matrix; sequence DTVRRRMMMQSGRKGTDIMYTGTLDCWRKIARDEGAKAFFKG. Arginine 235 contacts ADP. The tract at residues 235 to 240 is important for transport activity; sequence RRRMMM. Residues 235 to 240 carry the Nucleotide carrier signature motif motif; that stretch reads RRRMMM. Lysine 268 is subject to N6-acetyllysine; alternate. Lysine 268 carries the N6-succinyllysine; alternate modification. A helical membrane pass occupies residues 274-291; sequence AWSNVLRGMGGAFVLVLY. Over 292–298 the chain is Mitochondrial intermembrane; the sequence is DEIKKFT.

Belongs to the mitochondrial carrier (TC 2.A.29) family. In terms of assembly, monomer. Component of the MMXD complex, which includes CIAO1, ERCC2, CIAO2B, MMS19 and SLC25A5/ANT2. Interacts with AK4. Interacts with TIMM44; leading to inhibit the presequence translocase TIMM23, thereby promoting stabilization of PINK1. Trimethylated by ANTKMT at Lys-52.

It localises to the mitochondrion inner membrane. The protein localises to the membrane. It catalyses the reaction ADP(in) + ATP(out) = ADP(out) + ATP(in). It carries out the reaction H(+)(in) = H(+)(out). The matrix-open state (m-state) is inhibited by the membrane-permeable bongkrekic acid (BKA). The cytoplasmic-open state (c-state) is inhibited by the membrane-impermeable toxic inhibitor carboxyatractyloside (CATR). Proton transporter activity is inhibited by ADP:ATP antiporter activity. Its function is as follows. ADP:ATP antiporter that mediates import of ADP into the mitochondrial matrix for ATP synthesis, and export of ATP out to fuel the cell. Cycles between the cytoplasmic-open state (c-state) and the matrix-open state (m-state): operates by the alternating access mechanism with a single substrate-binding site intermittently exposed to either the cytosolic (c-state) or matrix (m-state) side of the inner mitochondrial membrane. In addition to its ADP:ATP antiporter activity, also involved in mitochondrial uncoupling and mitochondrial permeability transition pore (mPTP) activity. Plays a role in mitochondrial uncoupling by acting as a proton transporter: proton transport uncouples the proton flows via the electron transport chain and ATP synthase to reduce the efficiency of ATP production and cause mitochondrial thermogenesis. Proton transporter activity is inhibited by ADP:ATP antiporter activity, suggesting that SLC25A5/ANT2 acts as a master regulator of mitochondrial energy output by maintaining a delicate balance between ATP production (ADP:ATP antiporter activity) and thermogenesis (proton transporter activity). Proton transporter activity requires free fatty acids as cofactor, but does not transport it. Probably mediates mitochondrial uncoupling in tissues that do not express UCP1. Also plays a key role in mPTP opening, a non-specific pore that enables free passage of the mitochondrial membranes to solutes of up to 1.5 kDa, and which contributes to cell death. It is however unclear if SLC25A5/ANT2 constitutes a pore-forming component of mPTP or regulates it. Acts as a regulator of mitophagy independently of ADP:ATP antiporter activity: promotes mitophagy via interaction with TIMM44, leading to inhibit the presequence translocase TIMM23, thereby promoting stabilization of PINK1. As part of the mitotic spindle-associated MMXD complex it may play a role in chromosome segregation. The polypeptide is ADP/ATP translocase 2 (Bos taurus (Bovine)).